The sequence spans 868 residues: mRNA-capping enzyme (868 aa).

The active-site N6-GMP-lysine intermediate is K282. An mRNA cap 0 methyltransferase domain is found at 594–868 (GIYRAQTALI…LFGFICLRKN (275 aa)). S-adenosyl-L-methionine contacts are provided by residues K607, G624, D646, and 710–712 (LFI).

In the N-terminal section; belongs to the dsDNA virus mRNA guanylyltransferase family. It in the C-terminal section; belongs to the class I-like SAM-binding methyltransferase superfamily. mRNA cap 0 methyltransferase family. As to quaternary structure, part of the viral DNA-directed RNA polymerase that consists of 8 polII-like subunits (RPB1, RPB2, RPB3, RPB5, RPB6, RPB7, RPB9, RPB10), a capping enzyme and a termination factor.

Its subcellular location is the virion. The enzyme catalyses a 5'-end triphospho-ribonucleoside in mRNA + H2O = a 5'-end diphospho-ribonucleoside in mRNA + phosphate + H(+). It carries out the reaction a 5'-end diphospho-ribonucleoside in mRNA + GTP + H(+) = a 5'-end (5'-triphosphoguanosine)-ribonucleoside in mRNA + diphosphate. It catalyses the reaction a 5'-end (5'-triphosphoguanosine)-ribonucleoside in mRNA + S-adenosyl-L-methionine = a 5'-end (N(7)-methyl 5'-triphosphoguanosine)-ribonucleoside in mRNA + S-adenosyl-L-homocysteine. Its pathway is mRNA processing; mRNA capping. Its function is as follows. Probably catalyzes the second reaction in the mRNA cap formation pathway. Forms a covalent complex with GTP. This Ornithodoros (relapsing fever ticks) protein is mRNA-capping enzyme.